Consider the following 608-residue polypeptide: Glutamine--fructose-6-phosphate aminotransferase [isomerizing] (608 aa).

The active-site Nucleophile; for GATase activity is Cys-2. Positions 2–217 constitute a Glutamine amidotransferase type-2 domain; it reads CGIVGIVGNQ…DGDWAVIGKT (216 aa). 2 SIS domains span residues 281–422 and 456–598; these read ISDA…ARGT and LSRE…VDQP. Residue Lys-603 is the For Fru-6P isomerization activity of the active site.

As to quaternary structure, homodimer.

The protein localises to the cytoplasm. It carries out the reaction D-fructose 6-phosphate + L-glutamine = D-glucosamine 6-phosphate + L-glutamate. Its function is as follows. Catalyzes the first step in hexosamine metabolism, converting fructose-6P into glucosamine-6P using glutamine as a nitrogen source. In Rhizobium meliloti (strain 1021) (Ensifer meliloti), this protein is Glutamine--fructose-6-phosphate aminotransferase [isomerizing].